A 186-amino-acid chain; its full sequence is Peptide deformylase (186 aa).

2 residues coordinate Fe cation: Cys99 and His141. Glu142 is a catalytic residue. Residue His145 coordinates Fe cation.

This sequence belongs to the polypeptide deformylase family. Fe(2+) is required as a cofactor.

The catalysed reaction is N-terminal N-formyl-L-methionyl-[peptide] + H2O = N-terminal L-methionyl-[peptide] + formate. Removes the formyl group from the N-terminal Met of newly synthesized proteins. Requires at least a dipeptide for an efficient rate of reaction. N-terminal L-methionine is a prerequisite for activity but the enzyme has broad specificity at other positions. The polypeptide is Peptide deformylase (Chlamydia felis (strain Fe/C-56) (Chlamydophila felis)).